We begin with the raw amino-acid sequence, 140 residues long: Putative pre-16S rRNA nuclease (140 aa).

It belongs to the YqgF nuclease family.

It localises to the cytoplasm. Its function is as follows. Could be a nuclease involved in processing of the 5'-end of pre-16S rRNA. This is Putative pre-16S rRNA nuclease from Mycoplasma pneumoniae (strain ATCC 29342 / M129 / Subtype 1) (Mycoplasmoides pneumoniae).